A 759-amino-acid chain; its full sequence is Protein AKNAD1 (759 aa).

The disordered stretch occupies residues 169–246; the sequence is TDQLNPKKDG…HTEKASSGNR (78 aa). Over residues 181-192 the composition is skewed to polar residues; the sequence is SNKPGSPTMTEE. A coiled-coil region spans residues 371–482; it reads QKISQGKQMC…EDVKDKVDES (112 aa). Residues 484 to 496 are compositionally biased toward polar residues; it reads YTSAPSLPVSSPV. Disordered stretches follow at residues 484–543, 634–654, 678–723, and 735–759; these read YTSA…QEAP, EKAP…FCSD, CRKE…PSLA, and PDTS…MKSQ. A compositionally biased stretch (low complexity) spans 497–509; sequence TLDDLASTSSSLS. A compositionally biased stretch (polar residues) spans 639–654; that stretch reads SDSTPNSDTGHSFCSD. Residues 679 to 688 show a composition bias toward basic and acidic residues; that stretch reads RKEPPKEFHY. A compositionally biased stretch (polar residues) spans 735-744; that stretch reads PDTSKSSPTP.

The protein belongs to the AKNA family.

The chain is Protein AKNAD1 (AKNAD1) from Macaca fascicularis (Crab-eating macaque).